A 474-amino-acid chain; its full sequence is ATP synthase subunit beta 2 (474 aa).

Gly-151–Thr-158 serves as a coordination point for ATP.

Belongs to the ATPase alpha/beta chains family. As to quaternary structure, F-type ATPases have 2 components, CF(1) - the catalytic core - and CF(0) - the membrane proton channel. CF(1) has five subunits: alpha(3), beta(3), gamma(1), delta(1), epsilon(1). CF(0) has four main subunits: a(1), b(1), b'(1) and c(9-12).

The protein localises to the cell inner membrane. It carries out the reaction ATP + H2O + 4 H(+)(in) = ADP + phosphate + 5 H(+)(out). In terms of biological role, produces ATP from ADP in the presence of a proton gradient across the membrane. The catalytic sites are hosted primarily by the beta subunits. The sequence is that of ATP synthase subunit beta 2 from Dinoroseobacter shibae (strain DSM 16493 / NCIMB 14021 / DFL 12).